The primary structure comprises 35 residues: KEGYPKNSEGCKITCLFNDPYCKGLCINLSTQADY.

Residues 1-35 (KEGYPKNSEGCKITCLFNDPYCKGLCINLSTQADY) form the LCN-type CS-alpha/beta domain.

As to expression, expressed by the venom gland.

It localises to the secreted. Causes paralysis and death in insects (A.domestica). The chain is Putative neurotoxin from Rhopalurus junceus (Caribbean blue scorpion).